We begin with the raw amino-acid sequence, 400 residues long: Keratin, type I cytoskeletal 19 (400 aa).

The head stretch occupies residues 1–79 (MTSYSYRQSS…TASDGLLAGN (79 aa)). An Omega-N-methylarginine modification is found at Arg-7. Residues Ser-14 and Ser-22 each carry the phosphoserine modification. Arg-24 carries the post-translational modification Asymmetric dimethylarginine; alternate. At Arg-24 the chain carries Omega-N-methylarginine; alternate. Residue Arg-32 is modified to Omega-N-methylarginine. Residues Ser-35 and Ser-40 each carry the phosphoserine modification. An omega-N-methylarginine mark is found at Arg-43 and Arg-51. 2 positions are modified to phosphoserine: Ser-57 and Ser-72. Residues 80-115 (EKLTMQNLNDRLASYLDKVRALEAANGELEVKIRDW) are coil 1A. The IF rod domain maps to 80–391 (EKLTMQNLND…SLLEGQEDHY (312 aa)). The segment at 116-133 (YQKQGPGPSRDYSHYYTT) is linker 1. Residues 134 to 225 (IQDLRDKILG…KNHEEEISTL (92 aa)) are coil 1B. The segment at 226-248 (RGQVGGQVSVEVDSAPGTDLAKI) is linker 12. A necessary for interaction with PNN region spans residues 244-390 (DLAKILSDMR…RSLLEGQEDH (147 aa)). The segment at 249 to 387 (LSDMRSQYEV…ATYRSLLEGQ (139 aa)) is coil 2. The residue at position 323 (Thr-323) is a Phosphothreonine. Residues 388–400 (EDHYNNLSASKVL) are rod-like helical tail. Tyr-391 is modified (phosphotyrosine). Ser-395 and Ser-397 each carry phosphoserine.

Belongs to the intermediate filament family. Heterotetramer of two type I and two type II keratins. Interacts with PNN and the actin-binding domain of DMD. Interacts with HCV core protein. As to quaternary structure, (Microbial infection) Interacts with hepatitis C virus/HCV core protein. In terms of tissue distribution, expressed in a defined zone of basal keratinocytes in the deep outer root sheath of hair follicles. Also observed in sweat gland and mammary gland ductal and secretory cells, bile ducts, gastrointestinal tract, bladder urothelium, oral epithelia, esophagus, ectocervical epithelium (at protein level). Expressed in epidermal basal cells, in nipple epidermis and a defined region of the hair follicle. Also seen in a subset of vascular wall cells in both the veins and artery of human umbilical cord, and in umbilical cord vascular smooth muscle. Observed in muscle fibers accumulating in the costameres of myoplasm at the sarcolemma in structures that contain dystrophin and spectrin.

Functionally, involved in the organization of myofibers. Together with KRT8, helps to link the contractile apparatus to dystrophin at the costameres of striated muscle. This Homo sapiens (Human) protein is Keratin, type I cytoskeletal 19 (KRT19).